The primary structure comprises 382 residues: 1-deoxy-D-xylulose 5-phosphate reductoisomerase (382 aa).

The NADPH site is built by Thr10, Gly11, Ser12, Ile13, Gly36, Lys37, Asn38, and Asn121. Lys122 lines the 1-deoxy-D-xylulose 5-phosphate pocket. Glu123 contributes to the NADPH binding site. Mn(2+) is bound at residue Asp147. Residues Ser148, Glu149, Ser173, and His196 each coordinate 1-deoxy-D-xylulose 5-phosphate. Residue Glu149 coordinates Mn(2+). Gly202 is a binding site for NADPH. 1-deoxy-D-xylulose 5-phosphate is bound by residues Ser209, Asn214, Lys215, and Glu218. Mn(2+) is bound at residue Glu218.

This sequence belongs to the DXR family. Mg(2+) serves as cofactor. Mn(2+) is required as a cofactor.

It carries out the reaction 2-C-methyl-D-erythritol 4-phosphate + NADP(+) = 1-deoxy-D-xylulose 5-phosphate + NADPH + H(+). The protein operates within isoprenoid biosynthesis; isopentenyl diphosphate biosynthesis via DXP pathway; isopentenyl diphosphate from 1-deoxy-D-xylulose 5-phosphate: step 1/6. Its function is as follows. Catalyzes the NADPH-dependent rearrangement and reduction of 1-deoxy-D-xylulose-5-phosphate (DXP) to 2-C-methyl-D-erythritol 4-phosphate (MEP). The chain is 1-deoxy-D-xylulose 5-phosphate reductoisomerase from Halalkalibacterium halodurans (strain ATCC BAA-125 / DSM 18197 / FERM 7344 / JCM 9153 / C-125) (Bacillus halodurans).